The sequence spans 308 residues: Cytochrome b (308 aa).

4 helical membrane-spanning segments follow: residues 1–21, 45–66, 81–101, and 146–166; these read FGLL…LLAA, WLIR…YLHI, WNIG…GYVX, and FFAL…VHLT. Positions 51 and 65 each coordinate heme b. Residues histidine 150 and histidine 164 each coordinate heme b. Histidine 169 lines the a ubiquinone pocket. 3 helical membrane-spanning segments follow: residues 194-214, 256-276, and 288-308; these read TKDV…ALFS, LGGV…PFLH, and LSQI…WVSN.

Belongs to the cytochrome b family. In terms of assembly, the cytochrome bc1 complex contains 11 subunits: 3 respiratory subunits (MT-CYB, CYC1 and UQCRFS1), 2 core proteins (UQCRC1 and UQCRC2) and 6 low-molecular weight proteins (UQCRH/QCR6, UQCRB/QCR7, UQCRQ/QCR8, UQCR10/QCR9, UQCR11/QCR10 and a cleavage product of UQCRFS1). This cytochrome bc1 complex then forms a dimer. Heme b serves as cofactor.

It localises to the mitochondrion inner membrane. In terms of biological role, component of the ubiquinol-cytochrome c reductase complex (complex III or cytochrome b-c1 complex) that is part of the mitochondrial respiratory chain. The b-c1 complex mediates electron transfer from ubiquinol to cytochrome c. Contributes to the generation of a proton gradient across the mitochondrial membrane that is then used for ATP synthesis. This Pomatostomus ruficeps (Chestnut-crowned babbler) protein is Cytochrome b (MT-CYB).